We begin with the raw amino-acid sequence, 518 residues long: Serine/threonine-protein kinase UL13 (518 aa).

Positions 1–119 are disordered; that stretch reads MDESRRQRPA…QAALTAPPSS (119 aa). In terms of domain architecture, Protein kinase spans 151–518; it reads PGARSFGGSG…TNPCARHALS (368 aa). Residues 157 to 165 and lysine 176 contribute to the ATP site; that span reads GGSGGYGDV. Aspartate 277 (proton acceptor) is an active-site residue.

It belongs to the protein kinase superfamily. Ser/Thr protein kinase family. Autophosphorylated.

The protein localises to the virion tegument. It localises to the host nucleus. It catalyses the reaction L-seryl-[protein] + ATP = O-phospho-L-seryl-[protein] + ADP + H(+). It carries out the reaction L-threonyl-[protein] + ATP = O-phospho-L-threonyl-[protein] + ADP + H(+). Multifunctional serine/threonine kinase that plays a role in several processes including egress of virus particles from the nucleus, modulation of the actin cytoskeleton and regulation of viral and cellular gene expression. Regulates the nuclear localization of viral envelopment factors UL34 and UL31, by phosphorylating the US3 kinase, indicating a role in nuclear egress. Disrupts host nuclear lamins, including LMNA and LMNB1. Phosphorylates the viral Fc receptor composed of glycoproteins E (gE) and I (gI). Phosphorylation of glycoprotein E (gE) by UL13 alters its subcellular localization, from the host early endosome to the plasma membrane. Participates in the transcriptional regulation of cellular and viral mRNAs mainly by phosphorylating the viral transcriptional regulator ICP22. Additional substrates have been identified, including UL41, UL49 or host EF1D. This is Serine/threonine-protein kinase UL13 from Homo sapiens (Human).